The chain runs to 368 residues: Germination protease (368 aa).

A propeptide spanning residues 1–15 (MKEPLDLSKYSVRTD) is cleaved from the precursor.

It belongs to the peptidase A25 family. As to quaternary structure, homotetramer. In terms of processing, autoproteolytically processed. The inactive tetrameric zymogen termed p46 autoprocesses to a smaller form termed p41, which is active only during spore germination.

The enzyme catalyses Endopeptidase action with P4 Glu or Asp, P1 preferably Glu &gt; Asp, P1' hydrophobic and P2' Ala.. Functionally, initiates the rapid degradation of small, acid-soluble proteins during spore germination. The sequence is that of Germination protease from Bacillus anthracis (strain A0248).